The chain runs to 245 residues: DNA polymerase sliding clamp (245 aa).

This sequence belongs to the PCNA family. In terms of assembly, homotrimer. The subunits circularize to form a toroid; DNA passes through its center. Replication factor C (RFC) is required to load the toroid on the DNA.

Functionally, sliding clamp subunit that acts as a moving platform for DNA processing. Responsible for tethering the catalytic subunit of DNA polymerase and other proteins to DNA during high-speed replication. The protein is DNA polymerase sliding clamp of Methanosarcina mazei (strain ATCC BAA-159 / DSM 3647 / Goe1 / Go1 / JCM 11833 / OCM 88) (Methanosarcina frisia).